Here is a 914-residue protein sequence, read N- to C-terminus: Inter-alpha-trypsin inhibitor heavy chain H1 (914 aa).

A signal peptide spans Met1–Gly30. Residues Leu31–Arg36 constitute a propeptide that is removed on maturation. One can recognise a VIT domain in the interval Ala39–Glu168. Residue Cys62 is glycosylated (S-linked (Hex...) cysteine). Ser131 is subject to Phosphoserine. N-linked (GlcNAc...) asparagine glycans are attached at residues Asn288 and Asn291. The VWFA domain occupies Ser293–Glu453. Phosphothreonine is present on residues Thr405 and Thr410. Residue Asn591 is glycosylated (N-linked (GlcNAc...) asparagine). O-linked (GalNAc...) threonine glycosylation occurs at Thr656. Asp675 bears the Aspartate 1-(chondroitin 4-sulfate)-ester mark. The propeptide occupies Pro676 to Phe914.

It belongs to the ITIH family. As to quaternary structure, I-alpha-I plasma protease inhibitors are assembled from one or two heavy chains (HC) and one light chain, bikunin. Inter-alpha-inhibitor (I-alpha-I) is composed of ITIH1/HC1, ITIH2/HC2 and bikunin. Interacts with TNFAIP6 (via Link and CUB domains). In terms of processing, heavy chains are linked to bikunin via chondroitin 4-sulfate esterified to the alpha-carboxyl of the C-terminal aspartate after propeptide cleavage. The S-linked glycan is composed of two 6-carbon sugars, possibly Glc or Gal.

Its subcellular location is the secreted. In terms of biological role, may act as a carrier of hyaluronan in serum or as a binding protein between hyaluronan and other matrix protein, including those on cell surfaces in tissues to regulate the localization, synthesis and degradation of hyaluronan which are essential to cells undergoing biological processes. The polypeptide is Inter-alpha-trypsin inhibitor heavy chain H1 (ITIH1) (Mesocricetus auratus (Golden hamster)).